We begin with the raw amino-acid sequence, 307 residues long: Putative serine/threonine-protein phosphatase C22H10.04 (307 aa).

Positions 51, 53, 79, and 111 each coordinate Mn(2+). His-112 acts as the Proton donor in catalysis. His-161 and His-236 together coordinate Mn(2+).

This sequence belongs to the PPP phosphatase family. PP-X subfamily. Mn(2+) serves as cofactor.

The enzyme catalyses O-phospho-L-seryl-[protein] + H2O = L-seryl-[protein] + phosphate. It carries out the reaction O-phospho-L-threonyl-[protein] + H2O = L-threonyl-[protein] + phosphate. This is Putative serine/threonine-protein phosphatase C22H10.04 from Schizosaccharomyces pombe (strain 972 / ATCC 24843) (Fission yeast).